The primary structure comprises 313 residues: Ribosomal RNA small subunit methyltransferase H (313 aa).

Residues 36–38, D56, F80, D102, and Q109 each bind S-adenosyl-L-methionine; that span reads GGH.

Belongs to the methyltransferase superfamily. RsmH family.

It localises to the cytoplasm. The catalysed reaction is cytidine(1402) in 16S rRNA + S-adenosyl-L-methionine = N(4)-methylcytidine(1402) in 16S rRNA + S-adenosyl-L-homocysteine + H(+). Functionally, specifically methylates the N4 position of cytidine in position 1402 (C1402) of 16S rRNA. This chain is Ribosomal RNA small subunit methyltransferase H, found in Haemophilus ducreyi (strain 35000HP / ATCC 700724).